We begin with the raw amino-acid sequence, 253 residues long: 1-(5-phosphoribosyl)-5-[(5-phosphoribosylamino)methylideneamino] imidazole-4-carboxamide isomerase (253 aa).

D8 serves as the catalytic Proton acceptor. D131 functions as the Proton donor in the catalytic mechanism.

This sequence belongs to the HisA/HisF family.

The protein localises to the cytoplasm. The catalysed reaction is 1-(5-phospho-beta-D-ribosyl)-5-[(5-phospho-beta-D-ribosylamino)methylideneamino]imidazole-4-carboxamide = 5-[(5-phospho-1-deoxy-D-ribulos-1-ylimino)methylamino]-1-(5-phospho-beta-D-ribosyl)imidazole-4-carboxamide. The protein operates within amino-acid biosynthesis; L-histidine biosynthesis; L-histidine from 5-phospho-alpha-D-ribose 1-diphosphate: step 4/9. The chain is 1-(5-phosphoribosyl)-5-[(5-phosphoribosylamino)methylideneamino] imidazole-4-carboxamide isomerase from Polynucleobacter asymbioticus (strain DSM 18221 / CIP 109841 / QLW-P1DMWA-1) (Polynucleobacter necessarius subsp. asymbioticus).